The primary structure comprises 429 residues: 28S rRNA (cytosine-C(5))-methyltransferase (429 aa).

G2 is subject to N-acetylglycine. S167 carries the post-translational modification Phosphoserine. S-adenosyl-L-methionine is bound by residues 234-240 (CAAPGNK), D258, R263, and D305. Residue C359 is the Nucleophile of the active site.

The protein belongs to the class I-like SAM-binding methyltransferase superfamily. RsmB/NOP family. In terms of tissue distribution, ubiquitous. Detected in placenta, heart and skeletal muscle.

It localises to the nucleus. Its subcellular location is the nucleolus. It carries out the reaction cytidine(3782) in 28S rRNA + S-adenosyl-L-methionine = 5-methylcytidine(3782) in 28S rRNA + S-adenosyl-L-homocysteine + H(+). Functionally, S-adenosyl-L-methionine-dependent methyltransferase that specifically methylates the C(5) position of cytosine 3782 (m5C3782) in 28S rRNA. m5C3782 promotes protein translation without affecting ribosome biogenesis and fidelity. Required for corpus callosum and cerebral cortex development. The sequence is that of 28S rRNA (cytosine-C(5))-methyltransferase from Homo sapiens (Human).